The primary structure comprises 432 residues: Trigger factor (432 aa).

The region spanning 161-246 (GTRATINFVG…VVKVEARELP (86 aa)) is the PPIase FKBP-type domain.

It belongs to the FKBP-type PPIase family. Tig subfamily.

It is found in the cytoplasm. The enzyme catalyses [protein]-peptidylproline (omega=180) = [protein]-peptidylproline (omega=0). Its function is as follows. Involved in protein export. Acts as a chaperone by maintaining the newly synthesized protein in an open conformation. Functions as a peptidyl-prolyl cis-trans isomerase. This is Trigger factor from Aliivibrio fischeri (strain MJ11) (Vibrio fischeri).